The primary structure comprises 401 residues: S-adenosylmethionine synthase (401 aa).

Position 136-141 (136-141 (GQGSVD)) interacts with ATP.

Belongs to the AdoMet synthase 2 family. Mg(2+) serves as cofactor.

It catalyses the reaction L-methionine + ATP + H2O = S-adenosyl-L-methionine + phosphate + diphosphate. It participates in amino-acid biosynthesis; S-adenosyl-L-methionine biosynthesis; S-adenosyl-L-methionine from L-methionine: step 1/1. Its function is as follows. Catalyzes the formation of S-adenosylmethionine from methionine and ATP. This chain is S-adenosylmethionine synthase, found in Pyrococcus furiosus (strain ATCC 43587 / DSM 3638 / JCM 8422 / Vc1).